The sequence spans 111 residues: DNA-directed RNA polymerase subunit Rpo11 (111 aa).

Belongs to the archaeal Rpo11/eukaryotic RPB11/RPC19 RNA polymerase subunit family. Part of the RNA polymerase complex.

The protein localises to the cytoplasm. The enzyme catalyses RNA(n) + a ribonucleoside 5'-triphosphate = RNA(n+1) + diphosphate. Its function is as follows. DNA-dependent RNA polymerase (RNAP) catalyzes the transcription of DNA into RNA using the four ribonucleoside triphosphates as substrates. The protein is DNA-directed RNA polymerase subunit Rpo11 of Thermoplasma volcanium (strain ATCC 51530 / DSM 4299 / JCM 9571 / NBRC 15438 / GSS1).